The sequence spans 74 residues: Anionic peptide clone 9 (74 aa).

A signal peptide spans 1-24 (MVSKSLIVLLLVSVLVSTFFTTEA).

It belongs to the non-disulfide-bridged peptide (NDBP) superfamily. Long chain multifunctional peptide (group 2) family. In terms of tissue distribution, expressed by the venom gland.

The protein localises to the secreted. In terms of biological role, may be an antimicrobial peptide. The protein is Anionic peptide clone 9 of Tityus costatus (Brazilian scorpion).